A 171-amino-acid polypeptide reads, in one-letter code: Voltage-dependent P/Q-type calcium channel subunit alpha-1A (171 aa).

A helical transmembrane segment spans residues 1–11; that stretch reads FVTVLGSITDI. Residues 1 to 171 form an IV repeat; the sequence is FVTVLGSITD…LMLNLFVAVI (171 aa). Residues 12–18 are Extracellular-facing; the sequence is LVTEFGN. A helical membrane pass occupies residues 19 to 37; that stretch reads NFINLSFLRLFRAARLIKL. The Cytoplasmic segment spans residues 38–56; it reads LRQGYTIRILLWTFVQSFK. The helical transmembrane segment at 57-76 threads the bilayer; sequence ALPYVCLLIAMLFFIYAIIG. Residues 77 to 143 lie on the Extracellular side of the membrane; that stretch reads MQVFGNIGIE…ENSGIKEDEC (67 aa). Residues 144–168 form a helical membrane-spanning segment; it reads GNEFAYFYFVSFIFLCSFLMLNLFV. Over 169 to 171 the chain is Cytoplasmic; the sequence is AVI.

It belongs to the calcium channel alpha-1 subunit (TC 1.A.1.11) family. CACNA1A subfamily. In terms of assembly, voltage-dependent calcium channels are multisubunit complexes, consisting of alpha-1, alpha-2, beta and delta subunits in a 1:1:1:1 ratio. The channel activity is directed by the pore-forming and voltage-sensitive alpha-1 subunit. In many cases, this subunit is sufficient to generate voltage-sensitive calcium channel activity. The auxiliary subunits beta and alpha-2/delta linked by a disulfide bridge regulate the channel activity.

Its subcellular location is the cell membrane. The catalysed reaction is Ca(2+)(in) = Ca(2+)(out). The isoform alpha-1A gives rise to P and/or Q-type calcium currents. P/Q-type calcium channels belong to the 'high-voltage activated' (HVA) group. This is Voltage-dependent P/Q-type calcium channel subunit alpha-1A (CACNA1A) from Gallus gallus (Chicken).